Consider the following 263-residue polypeptide: MPSVFLLFDIGNTNVKIGIADHDGVVASYVLPTDTHQTGDSLGLRLADVVRHAGFAPGDVTACVASSVVPSFNPLMRQACGRYFDRRLLLAPEDIAIPLENRYERPQEVGADRLVAAFAARRLWPAPRSIVSVDYGTATTFDCVQGEAYLGGLICPGVHSAAGALAAGTARLPRISLDVREDLPVVGRSTSMSLNHGFVFGFASMTEGLCHRLSAVLEAPMQVVATGGFASAIARVSNCFDHVRPDLLLEGLRILYMESGIKG.

Residue 9–16 (DIGNTNVK) participates in ATP binding. Residues Y103 and 110–113 (GADR) each bind substrate. Catalysis depends on D112, which acts as the Proton acceptor. Residue D134 participates in K(+) binding. Residue T137 coordinates ATP. T190 serves as a coordination point for substrate.

Belongs to the type III pantothenate kinase family. Homodimer. NH4(+) serves as cofactor. It depends on K(+) as a cofactor.

The protein resides in the cytoplasm. It carries out the reaction (R)-pantothenate + ATP = (R)-4'-phosphopantothenate + ADP + H(+). Its pathway is cofactor biosynthesis; coenzyme A biosynthesis; CoA from (R)-pantothenate: step 1/5. Its function is as follows. Catalyzes the phosphorylation of pantothenate (Pan), the first step in CoA biosynthesis. This chain is Type III pantothenate kinase, found in Oleidesulfovibrio alaskensis (strain ATCC BAA-1058 / DSM 17464 / G20) (Desulfovibrio alaskensis).